The sequence spans 232 residues: Phosphatidylserine decarboxylase proenzyme (232 aa).

S190 functions as the Schiff-base intermediate with substrate; via pyruvic acid in the catalytic mechanism. S190 carries the pyruvic acid (Ser); by autocatalysis modification.

It belongs to the phosphatidylserine decarboxylase family. PSD-A subfamily. Heterodimer of a large membrane-associated beta subunit and a small pyruvoyl-containing alpha subunit. It depends on pyruvate as a cofactor. Is synthesized initially as an inactive proenzyme. Formation of the active enzyme involves a self-maturation process in which the active site pyruvoyl group is generated from an internal serine residue via an autocatalytic post-translational modification. Two non-identical subunits are generated from the proenzyme in this reaction, and the pyruvate is formed at the N-terminus of the alpha chain, which is derived from the carboxyl end of the proenzyme. The post-translation cleavage follows an unusual pathway, termed non-hydrolytic serinolysis, in which the side chain hydroxyl group of the serine supplies its oxygen atom to form the C-terminus of the beta chain, while the remainder of the serine residue undergoes an oxidative deamination to produce ammonia and the pyruvoyl prosthetic group on the alpha chain.

The protein resides in the cell membrane. The catalysed reaction is a 1,2-diacyl-sn-glycero-3-phospho-L-serine + H(+) = a 1,2-diacyl-sn-glycero-3-phosphoethanolamine + CO2. Its pathway is phospholipid metabolism; phosphatidylethanolamine biosynthesis; phosphatidylethanolamine from CDP-diacylglycerol: step 2/2. Its function is as follows. Catalyzes the formation of phosphatidylethanolamine (PtdEtn) from phosphatidylserine (PtdSer). The sequence is that of Phosphatidylserine decarboxylase proenzyme from Rhizobium johnstonii (strain DSM 114642 / LMG 32736 / 3841) (Rhizobium leguminosarum bv. viciae).